The sequence spans 163 residues: C-type lectin lectoxin-Lio2 (163 aa).

Positions 1 to 21 (MERFIFAALLVVALSLSGTGA) are cleaved as a signal peptide. 3 disulfides stabilise this stretch: Cys-25–Cys-36, Cys-53–Cys-152, and Cys-127–Cys-144. In terms of domain architecture, C-type lectin spans 32 to 153 (SDGYCYKVFK…CRSKRYFICK (122 aa)). The Mannose-binding motif lies at 117 to 119 (EPN). 2 residues coordinate Ca(2+): Glu-125 and Asp-141.

The protein belongs to the true venom lectin family. In terms of tissue distribution, expressed by the venom gland.

It localises to the secreted. Functionally, mannose-binding lectin which recognizes specific carbohydrate structures and agglutinates a variety of animal cells by binding to cell-surface glycoproteins and glycolipids. May be a calcium-dependent lectin. This is C-type lectin lectoxin-Lio2 from Erythrolamprus poecilogyrus (Water snake).